A 170-amino-acid polypeptide reads, in one-letter code: Urease accessory protein UreE (170 aa).

This sequence belongs to the UreE family.

The protein resides in the cytoplasm. Functionally, involved in urease metallocenter assembly. Binds nickel. Probably functions as a nickel donor during metallocenter assembly. In Helicobacter pylori (strain P12), this protein is Urease accessory protein UreE.